A 147-amino-acid chain; its full sequence is Transcriptional repressor NrdR (147 aa).

A zinc finger spans residues 3–34; that stretch reads CLFCRSDDTKVIDSRTSEDGISIRRRRECQLC. The ATP-cone domain occupies 46-136; that stretch reads LTVIKRNGTS…VYQDFDSLED (91 aa).

Belongs to the NrdR family. It depends on Zn(2+) as a cofactor.

Functionally, negatively regulates transcription of bacterial ribonucleotide reductase nrd genes and operons by binding to NrdR-boxes. The polypeptide is Transcriptional repressor NrdR (Tropheryma whipplei (strain TW08/27) (Whipple's bacillus)).